The chain runs to 175 residues: ATP synthase subunit b, chloroplastic (175 aa).

A helical membrane pass occupies residues 22-42 (VFETNIINLAAVVGIVVSFVG).

This sequence belongs to the ATPase B chain family. F-type ATPases have 2 components, F(1) - the catalytic core - and F(0) - the membrane proton channel. F(1) has five subunits: alpha(3), beta(3), gamma(1), delta(1), epsilon(1). F(0) has four main subunits: a(1), b(1), b'(1) and c(10-14). The alpha and beta chains form an alternating ring which encloses part of the gamma chain. F(1) is attached to F(0) by a central stalk formed by the gamma and epsilon chains, while a peripheral stalk is formed by the delta, b and b' chains.

The protein resides in the plastid. It is found in the chloroplast thylakoid membrane. Its function is as follows. F(1)F(0) ATP synthase produces ATP from ADP in the presence of a proton or sodium gradient. F-type ATPases consist of two structural domains, F(1) containing the extramembraneous catalytic core and F(0) containing the membrane proton channel, linked together by a central stalk and a peripheral stalk. During catalysis, ATP synthesis in the catalytic domain of F(1) is coupled via a rotary mechanism of the central stalk subunits to proton translocation. In terms of biological role, component of the F(0) channel, it forms part of the peripheral stalk, linking F(1) to F(0). The chain is ATP synthase subunit b, chloroplastic from Chlamydomonas reinhardtii (Chlamydomonas smithii).